Consider the following 317-residue polypeptide: Taste receptor type 2 member 14 (317 aa).

Topologically, residues 1 to 7 are extracellular; the sequence is MGGVIKS. Residues 8 to 28 traverse the membrane as a helical segment; that stretch reads IFTFVLIVEFIIGNLGNSFIA. Residues 29–55 lie on the Cytoplasmic side of the membrane; that stretch reads LVNCIDWVKGRKISSVDRILTALAISK. The chain crosses the membrane as a helical span at residues 56–76; it reads ISLVWLIFGSWCVSVFFPALF. Over 77–87 the chain is Extracellular; the sequence is ATEKMFRMLTN. Positions 86 and 89 each coordinate cholesterol. Residues 88–108 form a helical membrane-spanning segment; the sequence is IWTVINHFSVWLATGLGTFYF. At 109-129 the chain is on the cytoplasmic side; sequence LKIANFSNSIFLYLKWRVKKV. Residues 130–150 traverse the membrane as a helical segment; it reads VLVLLLVTSVFLFLNIALINI. At 151 to 184 the chain is on the extracellular side; it reads HINASINGYRRNKTCSSDSSNFTRFSSLIVLTST. N-linked (GlcNAc...) asparagine glycans are attached at residues Asn-153, Asn-162, and Asn-171. Residue Val-180 participates in cholesterol binding. Residues 185–205 traverse the membrane as a helical segment; that stretch reads VFIFIPFTLSLAMFLLLIFSX. At 206-232 the chain is on the cytoplasmic side; sequence WKHRKKMQHTVKRSGDASTKAHRGVKS. Residues 233-253 traverse the membrane as a helical segment; the sequence is VXTFFLLYAIFCLSFFISVWT. Residues 254 to 261 lie on the Extracellular side of the membrane; it reads SERLEENL. A helical transmembrane segment spans residues 262-282; the sequence is IILSQVMGMAYPSCHSCVLIL. Ser-265 and Met-268 together coordinate cholesterol. Residues 283-317 are Cytoplasmic-facing; that stretch reads GNKKLRQASLSVLLWLRYMFKDGEPSGHKEFRESS.

This sequence belongs to the G-protein coupled receptor T2R family. As to quaternary structure, core component of the TAS2R14-GNAI1 complex, consisting of TAS2R14, GNAI1, GNB1 and GNG2; within the complex interacts with GNAI1. Core component of the TAS2R14-GNAT3 complex, consisting of TAS2R14, GNAT3, GNB1 and GNG2; within the complex interacts with GNAT3. Core component of the TAS2R14-GNAS2 complex, consisting of TAS2R14, GNAS2, GNB1 and GNG2; within the complex interacts with GNAS2.

The protein localises to the membrane. It carries out the reaction Ca(2+)(in) = Ca(2+)(out). The catalysed reaction is 3',5'-cyclic AMP(in) = 3',5'-cyclic AMP(out). Basal activity is enhanced by binding to bitter tastants, such as flufenamic acid and aristolochic acid. Regulated by cholesterol in a concentration-dependent manner. Its function is as follows. Gustducin-linked G-protein coupled receptor that plays a role in the perception of bitterness. The activity of this receptor stimulates GNAT3, activating the gustducin G-protein pathway. Likely plays a role in sensing the chemical composition of the gastrointestinal content and other extra-oral tissues via the inhibitory G-protein pathways. The sequence is that of Taste receptor type 2 member 14 (TAS2R14) from Pan troglodytes (Chimpanzee).